A 235-amino-acid chain; its full sequence is Ribosomal RNA small subunit methyltransferase G (235 aa).

S-adenosyl-L-methionine-binding positions include Gly-74, Phe-79, 97 to 99 (EAT), 125 to 126 (AE), and Arg-144.

Belongs to the methyltransferase superfamily. RNA methyltransferase RsmG family.

It is found in the cytoplasm. Specifically methylates the N7 position of a guanine in 16S rRNA. This chain is Ribosomal RNA small subunit methyltransferase G, found in Dehalococcoides mccartyi (strain CBDB1).